Here is an 822-residue protein sequence, read N- to C-terminus: Molybdenum cofactor sulfurase (822 aa).

The residue at position 245 (K245) is an N6-(pyridoxal phosphate)lysine. Residue C412 is part of the active site. In terms of domain architecture, MOSC spans 658-814; sequence LRLIRQSSND…LKTYSPIKAI (157 aa).

This sequence belongs to the class-V pyridoxal-phosphate-dependent aminotransferase family. MOCOS subfamily. Requires pyridoxal 5'-phosphate as cofactor.

The enzyme catalyses Mo-molybdopterin + L-cysteine + AH2 = thio-Mo-molybdopterin + L-alanine + A + H2O. It functions in the pathway cofactor biosynthesis; molybdopterin biosynthesis. Functionally, sulfurates the molybdenum cofactor. Sulfation of molybdenum is essential for xanthine dehydrogenase (XDH) and aldehyde oxidase (ADO) enzymes in which molybdenum cofactor is liganded by 1 oxygen and 1 sulfur atom in active form. The sequence is that of Molybdenum cofactor sulfurase from Bombyx mori (Silk moth).